The primary structure comprises 495 residues: ATP synthase subunit beta, chloroplastic (495 aa).

172–179 (GGAGVGKT) contributes to the ATP binding site.

The protein belongs to the ATPase alpha/beta chains family. In terms of assembly, F-type ATPases have 2 components, CF(1) - the catalytic core - and CF(0) - the membrane proton channel. CF(1) has five subunits: alpha(3), beta(3), gamma(1), delta(1), epsilon(1). CF(0) has four main subunits: a(1), b(1), b'(1) and c(9-12).

The protein localises to the plastid. It is found in the chloroplast thylakoid membrane. The enzyme catalyses ATP + H2O + 4 H(+)(in) = ADP + phosphate + 5 H(+)(out). Produces ATP from ADP in the presence of a proton gradient across the membrane. The catalytic sites are hosted primarily by the beta subunits. The chain is ATP synthase subunit beta, chloroplastic from Convallaria majalis (Lily of the valley).